The chain runs to 376 residues: NADPH oxidase organizer 1 (376 aa).

In terms of domain architecture, PX spans 1-131 (MAGPRYPVSV…GFFAPQPLDL (131 aa)). SH3 domains follow at residues 163-225 (LEAQ…EAAP) and 237-296 (SSGP…PEGL). The disordered stretch occupies residues 302–376 (GTGFRGGDDP…DSVPHPTTEQ (75 aa)). The segment covering 326–335 (APPPTVPTRP) has biased composition (pro residues). Residues 328–337 (PPTVPTRPSP) form a proline-rich region; mediates mutually exclusive interactions with itself and NOXA1 region.

In terms of assembly, interacts with NOX1, NOXA1, CYBA/p22phox and NCF2/p67phox. Interacts with SH3PXD2A and SH3PXD2B. As to expression, expressed in testis, small and large intestines, liver, kidney and pancreas. Isoform 3 is mainly expressed in colon. Isoform 1 is preferentially expressed in testis.

The protein localises to the cell membrane. Functionally, constitutively potentiates the superoxide-generating activity of NOX1 and NOX3 and is required for the biogenesis of otoconia/otolith, which are crystalline structures of the inner ear involved in the perception of gravity. Isoform 3 is more potent than isoform 1 in activating NOX3. Together with NOXA1, may also substitute to NCF1/p47phox and NCF2/p67phox in supporting the phagocyte NOX2/gp91phox superoxide-generating activity. This chain is NADPH oxidase organizer 1 (NOXO1), found in Homo sapiens (Human).